The chain runs to 459 residues: NADP-specific glutamate dehydrogenase (459 aa).

Lys-114 is an active-site residue.

This sequence belongs to the Glu/Leu/Phe/Val dehydrogenases family. In terms of assembly, homohexamer.

The enzyme catalyses L-glutamate + NADP(+) + H2O = 2-oxoglutarate + NH4(+) + NADPH + H(+). The chain is NADP-specific glutamate dehydrogenase (gdhA) from Emericella nidulans (strain FGSC A4 / ATCC 38163 / CBS 112.46 / NRRL 194 / M139) (Aspergillus nidulans).